Consider the following 537-residue polypeptide: Cytochrome P450 monooxygenase yanC (537 aa).

The N-terminal stretch at 1-21 (MALVHLTALAACGLLLVILRA) is a signal peptide. C449 contributes to the heme binding site.

It belongs to the cytochrome P450 family. Requires heme as cofactor.

Its pathway is secondary metabolite biosynthesis; terpenoid biosynthesis. Its function is as follows. Cytochrome P450 monooxygenase; part of the gene cluster that mediates the biosynthesis of yanuthone D, a fungal isoprenoid epoxycyclohexenone that acts as an antibiotic against fungi and bacteria. The first step of the pathway is the synthesis of 6-methylsalicylic acid (6-MSA) by the polyketide synthase yanA. 6-MSA is then converted to m-cresol by the decarboxylase yanB. The cytochrome P450 monooxygenase yanC then catalyzes the oxidation of m-cresol to toluquinol. Epoxidation of toluquinol is then performed by the short chain dehydrogenase yanD, with the help of yanE, and a further prenylation by yanG leads to 7-deacetoxyyanuthone A. The next step is the hydroxylation of C-22 of 7-deacetoxyyanuthone A by the cytochrome P450 monooxygenase yanH to yield 22-deacetylyanuthone A. O-Mevalon transferase yanI then attaches mevalon to the hydroxyl group of 22-deacetylyanuthone A to produce yanuthone E. Finally, the FAD-dependent monooxygenase yanF oxidizes the hydroxyl group at C15 of yanuthone E to form yanuthone D. Furthermore, several branching points in the pathway lead to the production of yanuthones F and G from 7-deacetoxyyanuthone A; yanuthones H and I from 22-deacetylyanuthone A; and yanuthone J from yanuthone E. YanC is also involved in the synthesis of yanuthone X1 which does not have 6-methylsalicylic acid (6-MSA) as precursor. This chain is Cytochrome P450 monooxygenase yanC, found in Aspergillus niger (strain ATCC 1015 / CBS 113.46 / FGSC A1144 / LSHB Ac4 / NCTC 3858a / NRRL 328 / USDA 3528.7).